We begin with the raw amino-acid sequence, 178 residues long: MSAKVVEILSSEEIRRTLTRLASQIVERTRDLSQLVLLGIYTRGALLAELLARQIETLEGVAVSVGALDITFYRDDLDTIGLRTPTKSEIPFDLTGKTVVLVDDVIFKGRTIRAALNAVNDYGRPEVIRLAVLVDRGHRELPIHPDFIGKKLPTAKEEVVKVYLQNYDGRDAVELIGD.

The PRPP-binding motif lies at 99–111; it reads VVLVDDVIFKGRT.

It belongs to the purine/pyrimidine phosphoribosyltransferase family. PyrR subfamily.

It catalyses the reaction UMP + diphosphate = 5-phospho-alpha-D-ribose 1-diphosphate + uracil. In terms of biological role, regulates the transcription of the pyrimidine nucleotide (pyr) operon in response to exogenous pyrimidines. Also displays a weak uracil phosphoribosyltransferase activity which is not physiologically significant. The chain is Bifunctional protein PyrR from Nostoc punctiforme (strain ATCC 29133 / PCC 73102).